The primary structure comprises 388 residues: MIKNPKVLILTAHYGNGHVQVAKTLEQTFRQKGIKDVIVCDLFGESHPVITDITKYLYLKSYTIGKELYRLFYYGVEKIYDKKIASWYANFGRKRLKLLLKAEKPDIVINTFPIIAVPELKKQTGISIPVYNVLTDFCVHKIWIHREVDRYFVATDHVKKVMVDIGVPAEQIVETGIPIRSSFELKINPDIIYNKYQLCKNKKILLIVAGAHGVLGSVKELCQSFMSVPDLQVVVVCGKNEALKQDLVGVQDTNPDALKVFGYVENIDELFRVTSCMITKPGGITLSEAAALQVPVILYKPVPGQENENAMYFERKGAAVVIRDDSEVFAKTEALLQDDMKLLQMKEAMKSIYRPEPAGHIVDTILAENHVEPNHIPIKSPALAQSFT.

Belongs to the glycosyltransferase 28 family. UgtP subfamily.

The protein resides in the cell membrane. It catalyses the reaction a 1,2-diacyl-3-O-(beta-D-glucopyranosyl)-sn-glycerol + UDP-alpha-D-glucose = a 1,2-diacyl-3-O-(beta-D-Glc-(1-&gt;6)-beta-D-Glc)-sn-glycerol + UDP + H(+). It carries out the reaction a 1,2-diacyl-3-O-(beta-D-Glc-(1-&gt;6)-beta-D-Glc)-sn-glycerol + UDP-alpha-D-glucose = a 1,2-diacyl-3-O-(beta-D-Glc-(1-&gt;6)-beta-D-Glc-(1-&gt;6)-beta-D-Glc)-sn-glycerol + UDP + H(+). The catalysed reaction is a 1,2-diacyl-sn-glycerol + UDP-alpha-D-glucose = a 1,2-diacyl-3-O-(beta-D-glucopyranosyl)-sn-glycerol + UDP + H(+). Its pathway is glycolipid metabolism; diglucosyl-diacylglycerol biosynthesis. Functionally, processive glucosyltransferase involved in the biosynthesis of both the bilayer- and non-bilayer-forming membrane glucolipids. Is able to successively transfer up to three glucosyl residues to diacylglycerol (DAG), thereby catalyzing the formation of beta-monoglucosyl-DAG (3-O-(beta-D-glucopyranosyl)-1,2-diacyl-sn-glycerol), beta-diglucosyl-DAG (3-O-(beta-D-glucopyranosyl-beta-(1-&gt;6)-D-glucopyranosyl)-1,2-diacyl-sn-glycerol) and beta-triglucosyl-DAG (3-O-(beta-D-glucopyranosyl-beta-(1-&gt;6)-D-glucopyranosyl-beta-(1-&gt;6)-D-glucopyranosyl)-1,2-diacyl-sn-glycerol). Beta-diglucosyl-DAG is the predominant glycolipid found in Bacillales and is also used as a membrane anchor for lipoteichoic acid (LTA). This chain is Processive diacylglycerol beta-glucosyltransferase, found in Bacillus cereus (strain 03BB102).